The chain runs to 538 residues: SWM histone demethylase complex subunit phf2 (538 aa).

3 disordered regions span residues 28–47, 98–150, and 198–222; these read RFPNDLHPTMFEGEESNQNG, EIES…SSPL, and TKSGRKVHRPNHFDPLVKLPTRRRG. Positions 98–111 are enriched in basic and acidic residues; sequence EIESSKNQETDAKS. The PHD-type zinc-finger motif lies at 232-288; sequence AMKCSVCQRLQSPPKNRIVFCDGCNTPFHQLCHEPYISDELLDSPNGEWFCDDCIRR. Residues 367 to 392 are compositionally biased toward polar residues; it reads GDQYLSLNNGTESQSKTTKHSTSLPS. The segment at 367-396 is disordered; that stretch reads GDQYLSLNNGTESQSKTTKHSTSLPSTEPV.

In terms of assembly, component of the SWM histone demethylase complex composed of at least lsd1, lsd2, phf1 and phf2.

It is found in the nucleus. Its function is as follows. Component of the SWM histone demethylase complex that specifically demethylates H3K9me2, a specific tag for epigenetic transcriptional activation, thereby acting as a corepressor. Has a role in regulating heterochromatin propagation and euchromatic transcription. This Schizosaccharomyces pombe (strain 972 / ATCC 24843) (Fission yeast) protein is SWM histone demethylase complex subunit phf2 (phf2).